The sequence spans 231 residues: uncharacterized protein (231 aa).

It belongs to the DnaA family. HdA subfamily.

This is an uncharacterized protein from Haemophilus influenzae (strain ATCC 51907 / DSM 11121 / KW20 / Rd).